Reading from the N-terminus, the 290-residue chain is Cell division protein ZipA (290 aa).

M1 is a topological domain (periplasmic). A helical membrane pass occupies residues 2–22 (DIGLREWLIVIGLIVIAGILF). Over 23–290 (DGWRRMRGGK…HERRSLMQKR (268 aa)) the chain is Cytoplasmic. A disordered region spans residues 66 to 143 (REPSFDEQDL…REKAPSVAAA (78 aa)). Residues 81 to 99 (REGKERKGGKRQDEPRQGD) are compositionally biased toward basic and acidic residues. Acidic residues predominate over residues 100-114 (LDLDEGMALEADPSD).

It belongs to the ZipA family. As to quaternary structure, interacts with FtsZ via their C-terminal domains.

The protein localises to the cell inner membrane. Functionally, essential cell division protein that stabilizes the FtsZ protofilaments by cross-linking them and that serves as a cytoplasmic membrane anchor for the Z ring. Also required for the recruitment to the septal ring of downstream cell division proteins. This Pseudomonas paraeruginosa (strain DSM 24068 / PA7) (Pseudomonas aeruginosa (strain PA7)) protein is Cell division protein ZipA.